Here is a 531-residue protein sequence, read N- to C-terminus: Protein SHORT-ROOT (531 aa).

A compositionally biased stretch (low complexity) spans 14-39 (QQSDSIITNQSSLSRTSTTTTGSPQT). Disordered regions lie at residues 14–40 (QQSD…PQTA) and 65–103 (SSSS…PSST). Polar residues predominate over residues 81 to 93 (TYYSPFTTPTQYH). Over residues 94-103 (PATSSTPSST) the composition is skewed to low complexity. Residues 134 to 529 (FDFSANAKWA…QPVVWASAWR (396 aa)) form the GRAS domain. Positions 141-206 (KWADSVLLEA…GSGERCYRTM (66 aa)) are leucine repeat I (LRI). A VHIID region spans residues 225 to 290 (VLKFQEVSPW…DDTPHLRLTT (66 aa)). The short motif at 256 to 260 (IHIVD) is the VHIID element. The segment at 310 to 343 (EIGNRMEKFARLMGVPFKFNIIHHVGDLSEFDLN) is leucine repeat II (LRII). The tract at residues 353-449 (LAINCVGAMH…ERAAGRAIVD (97 aa)) is PFYRE. The tract at residues 452-529 (ACEPSDSTER…QPVVWASAWR (78 aa)) is SAW.

This sequence belongs to the GRAS family. Interacts with SCR, SCL23, JKD and MGP. Interacts with SIEL. Association to endosomes and intercellular movement of SHR rely on the interaction with SIEL. In terms of tissue distribution, expressed in the stele and the quiescent center. Not detected in the ground tissue cell lineage. The SHR protein moves from the stele to a single layer of adjacent cells, where it enters the nucleus.

It is found in the cytoplasm. It localises to the nucleus. Its subcellular location is the early endosome. The protein localises to the late endosome. The protein resides in the recycling endosome. Transcription factor required for quiescent center cells specification and maintenance of surrounding stem cells, and for the asymmetric cell division involved in radial pattern formation in roots. Essential for both cell division and cell specification. Regulates the radial organization of the shoot axial organs and is required for normal shoot gravitropism. Directly controls the transcription of SCR, and when associated with SCR, of MGP, RLK, TRI, NUC and SCL3. The protein is Protein SHORT-ROOT of Arabidopsis thaliana (Mouse-ear cress).